The chain runs to 440 residues: Cytochrome P450 monooygenase 1 (440 aa).

Cysteine 381 is a binding site for heme.

Belongs to the cytochrome P450 family. Heme is required as a cofactor.

It participates in plant hormone biosynthesis; gibberellin biosynthesis. Its function is as follows. GA14 synthase; part of the gene cluster that mediates the biosynthesis of gibberellins (GAs), diterpenoids that may provide a selective advantage during infection of the preferred host plant, rice. Gibberellins (GAs) are diterpenoids and are synthesized via the mevalonate pathway. Biosynthesis of the major metabolite GA3 (gibberellic acid) from geranylgeranyl diphosphate (GGPP) requires 13 steps. The GGPP produced by the geranylgeranyl diphosphate synthase GGS2 is converted to ent-kaurene via ent-copalyldiphosphate in a two-step cyclization reaction performed by the bifunctional ent-copalyl diphosphate synthase/ent-kaurene synthase enzyme (CPS/KS). Ent-Kaurene is metabolized to GAs by a series of oxidation reactions catalyzed by cytochrome P450 monooxygenases. Cytochrome P450 monooxygenase P450-4 is an ent-kaurene oxidase that catalyzes the three oxidation steps between ent-kaurene and ent-kaurenoic acid. The highly multifunctional cytochrome P450 monooxygenase P450-1 then catalyzes four steps involving oxidation at two carbon atoms, in the main pathway from ent-kaurenoic acid to GA14 via GA12-aldehyde as well as producing kaurenolides and fujenoic acids as by-products. The cytochrome P450 monooxygenase P450-2 then converts GA14 to GA4 by removal of C-20. GA4 is further converted to GA7 by the GA4 desaturase DES via 1,2-desaturation before cytochrome P450 monooxygenase P450-3, a 13-hydroxylase, hydroxylates GA7 to GA3, the final product of the GA-biosynthetic pathway. This Gibberella fujikuroi (strain CBS 195.34 / IMI 58289 / NRRL A-6831) (Bakanae and foot rot disease fungus) protein is Cytochrome P450 monooygenase 1.